A 620-amino-acid polypeptide reads, in one-letter code: Dihydroxy-acid dehydratase (620 aa).

Aspartate 82 contributes to the Mg(2+) binding site. Position 123 (cysteine 123) interacts with [2Fe-2S] cluster. Mg(2+) contacts are provided by aspartate 124 and lysine 125. Lysine 125 is modified (N6-carboxylysine). Cysteine 197 serves as a coordination point for [2Fe-2S] cluster. Residue glutamate 493 participates in Mg(2+) binding. Serine 519 serves as the catalytic Proton acceptor.

This sequence belongs to the IlvD/Edd family. In terms of assembly, homodimer. Requires [2Fe-2S] cluster as cofactor. Mg(2+) serves as cofactor.

The enzyme catalyses (2R)-2,3-dihydroxy-3-methylbutanoate = 3-methyl-2-oxobutanoate + H2O. It catalyses the reaction (2R,3R)-2,3-dihydroxy-3-methylpentanoate = (S)-3-methyl-2-oxopentanoate + H2O. It functions in the pathway amino-acid biosynthesis; L-isoleucine biosynthesis; L-isoleucine from 2-oxobutanoate: step 3/4. It participates in amino-acid biosynthesis; L-valine biosynthesis; L-valine from pyruvate: step 3/4. Functions in the biosynthesis of branched-chain amino acids. Catalyzes the dehydration of (2R,3R)-2,3-dihydroxy-3-methylpentanoate (2,3-dihydroxy-3-methylvalerate) into 2-oxo-3-methylpentanoate (2-oxo-3-methylvalerate) and of (2R)-2,3-dihydroxy-3-methylbutanoate (2,3-dihydroxyisovalerate) into 2-oxo-3-methylbutanoate (2-oxoisovalerate), the penultimate precursor to L-isoleucine and L-valine, respectively. This chain is Dihydroxy-acid dehydratase, found in Bifidobacterium longum (strain NCC 2705).